The sequence spans 295 residues: Acetaldehyde dehydrogenase (295 aa).

11–14 contacts NAD(+); the sequence is SGNI. Cys127 serves as the catalytic Acyl-thioester intermediate. Residues 158–166 and Asn270 each bind NAD(+); that span reads SAGPGTRAN.

This sequence belongs to the acetaldehyde dehydrogenase family.

It catalyses the reaction acetaldehyde + NAD(+) + CoA = acetyl-CoA + NADH + H(+). This Geobacillus thermodenitrificans (strain NG80-2) protein is Acetaldehyde dehydrogenase (nbaJ).